Here is a 270-residue protein sequence, read N- to C-terminus: Transcription factor PU.1 (270 aa).

Positions 123–164 (SLSPAQPSSDEEEGERQSPPLEVSDGEADGLEPGPGLLPGET) are disordered. Phosphoserine occurs at positions 140 and 146. Residues 153–164 (LEPGPGLLPGET) are compositionally biased toward low complexity. Residues 170 to 253 (IRLYQFLLDL…VKKKLTYQFS (84 aa)) constitute a DNA-binding region (ETS). The DNA site is built by Lys217, Arg230, Arg233, and Lys243.

It belongs to the ETS family. Binds DNA as a monomer. Can form homomers. Directly interacts with CEBPD/NF-IL6-beta; this interaction does not affect DNA-binding properties of each partner. Interacts with NONO/p54(nrb). Interacts with RUNX1/AML1. Interacts with GFI1; the interaction represses SPI1 transcriptional activity, hence blocks SPI1-induced macrophage differentiation of myeloid progenitor cells. Interacts with CEBPE. Interacts with IRF4/Pip and IRF8. Interacts with JUN. Interacts with RB1. Interacts with TBP. In terms of tissue distribution, in the bone marrow, concentrated in hematopoietic stem cell, lymphoid progenitor, myeloid lineage (granulocyte macrophage progenitors, classical dendritic cells, monocytes) and B-cell clusters. Among B-cells, predominantly expressed in pre-B1 cells. Expressed in germinal center B-cells.

The protein resides in the nucleus. Its activity is regulated as follows. Transcriptional activity at macrophage-specific genes is inhibited by interaction with GFI1, which results in the inhibition of SPI1-induced macrophage differentiation of myeloid progenitor cells, but not that of the granulocyte lineage. In terms of biological role, pioneer transcription factor, which controls hematopoietic cell fate by decompacting stem cell heterochromatin and allowing other transcription factors to enter otherwise inaccessible genomic sites. Once in open chromatin, can directly control gene expression by binding genetic regulatory elements and can also more broadly influence transcription by recruiting transcription factors, such as interferon regulatory factors (IRFs), to otherwise inaccessible genomic regions. Transcriptionally activates genes important for myeloid and lymphoid lineages, such as CSF1R. Transcriptional activation from certain promoters, possibly containing low affinity binding sites, is achieved cooperatively with other transcription factors. FCER1A transactivation is achieved in cooperation with GATA1. May be particularly important for the pro- to pre-B cell transition. Binds (via the ETS domain) onto the purine-rich DNA core sequence 5'-GAGGAA-3', also known as the PU-box. In vitro can bind RNA and interfere with pre-mRNA splicing. This is Transcription factor PU.1 (SPI1) from Homo sapiens (Human).